The sequence spans 266 residues: Type II iodothyronine deiodinase (266 aa).

Residues Met-1–Gln-13 are Lumenal-facing. The chain crosses the membrane as a helical; Signal-anchor for type III membrane protein span at residues Ile-14 to Val-34. The Cytoplasmic portion of the chain corresponds to Lys-35–Arg-266. Sec-134 is a catalytic residue. A non-standard amino acid (selenocysteine) is located at residue Sec-134.

The protein belongs to the iodothyronine deiodinase family. Predominantly monomer. Can form homodimers but homodimerization is not essential for enzyme activity.

Its subcellular location is the endoplasmic reticulum membrane. It catalyses the reaction 3,3',5-triiodo-L-thyronine + iodide + A + H(+) = L-thyroxine + AH2. The catalysed reaction is 3,3'-diiodo-L-thyronine + iodide + A + H(+) = 3,3',5'-triiodo-L-thyronine + AH2. The enzyme catalyses 3'-iodo-L-thyronine + iodide + A + H(+) = 3',5'-diiodo-L-thyronine + AH2. Not inhibited by N(6)-propylthiouracil. Functionally, plays a crucial role in the metabolism of thyroid hormones (TH) and has specific roles in TH activation and inactivation by deiodination. Catalyzes the conversion of T4 (L-thyroxine/3,5,3',5'-tetraiodothyronine) to T3 (3,5,3'-triiodothyronine) and rT3 (3,3',5'-triiodothyronine) to T2 (3,3'-diiodothyronine) via outer-ring deiodination (ORD). Catalyzes the conversion 3',5'-T2 (3,5-diiodothyronine) to 3-T1 (3-monoiodothyronine) via ORD. This Fundulus heteroclitus (Killifish) protein is Type II iodothyronine deiodinase (dio2).